The sequence spans 302 residues: Large ribosomal subunit protein uL4m (302 aa).

Belongs to the universal ribosomal protein uL4 family. As to quaternary structure, component of the mitochondrial ribosome large subunit (39S) which comprises a 16S rRNA and about 50 distinct proteins.

Its subcellular location is the mitochondrion. In Danio rerio (Zebrafish), this protein is Large ribosomal subunit protein uL4m (mrpl4).